Consider the following 2201-residue polypeptide: Activating signal cointegrator 1 complex subunit 3 (2201 aa).

Serine 12 carries the post-translational modification Phosphoserine. Coiled-coil stretches lie at residues 18-81 (KQDN…KQIV) and 328-356 (IQSEQEKQLMKQYRREEKRIARREKKAGE). One can recognise a Helicase ATP-binding 1 domain in the interval 486–669 (ETAYNTNENM…FLHVNPCIGL (184 aa)). 499-506 (APTGAGKT) contacts ATP. The residue at position 572 (lysine 572) is an N6-acetyllysine. Residues 611-614 (DEVH) carry the DEVH box motif. In terms of domain architecture, Helicase C-terminal 1 spans 696 to 914 (QLNNMDEVCY…GTVTNVEEAV (219 aa)). The SEC63 1 domain maps to 978 to 1287 (STDLGRTASH…GAEAVCIINF (310 aa)). The Helicase ATP-binding 2 domain occupies 1336-1511 (HTLYHTDCNV…WLNIRQMGLF (176 aa)). ATP is bound at residue 1349-1356 (APTGSGKT). Positions 1453 to 1456 (DEIH) match the DEIH box motif. Positions 1544-1739 (PTFQAIRSHS…VLSDHLNAEI (196 aa)) constitute a Helicase C-terminal 2 domain. The SEC63 2 domain maps to 1812-2176 (PLTYGRIASY…LGLDQQYDIH (365 aa)).

The protein belongs to the helicase family. In terms of assembly, identified in the ASCC complex that contains ASCC1, ASCC2 and ASCC3. Functions as a scaffolding subunit that interacts directly with both ASCC1 and ASCC2. Interacts directly with ALKBH3, and thereby recruits ALKBH3 to the ASCC complex. Part of the ASC-1/TRIP4 complex, that contains TRIP4, ASCC1, ASCC2 and ASCC3. Part of the RQT (ribosome quality control trigger) complex, that contains ASCC2, ASCC3 and TRIP4. Associates with ribosomes; recruited to collided ribosomes. Interacts with ZCCHC4. Interacts with ZNF598. Interacts with RPS3.

The protein resides in the nucleus. It localises to the nucleus speckle. Its subcellular location is the cytoplasm. It is found in the cytosol. The enzyme catalyses Couples ATP hydrolysis with the unwinding of duplex DNA by translocating in the 3'-5' direction.. It catalyses the reaction ATP + H2O = ADP + phosphate + H(+). ATPase involved both in DNA repair and rescue of stalled ribosomes. 3'-5' DNA helicase involved in repair of alkylated DNA: promotes DNA unwinding to generate single-stranded substrate needed for ALKBH3, enabling ALKBH3 to process alkylated N3-methylcytosine (3mC) within double-stranded regions. Also involved in activation of the ribosome quality control (RQC) pathway, a pathway that degrades nascent peptide chains during problematic translation. Drives the splitting of stalled ribosomes that are ubiquitinated in a ZNF598-dependent manner, as part of the ribosome quality control trigger (RQT) complex. Part of the ASC-1 complex that enhances NF-kappa-B, SRF and AP1 transactivation. The chain is Activating signal cointegrator 1 complex subunit 3 (ascc3) from Bos taurus (Bovine).